The sequence spans 597 residues: Nucleolar protein 58 (597 aa).

A Nop domain is found at 285–410 (IAPNMTELVG…LENNLRQLEG (126 aa)). Residues 452 to 597 (AEAPKKPLIQ…KKKKKKSSKE (146 aa)) form a disordered region. Residues 482 to 499 (KSKKDKKEKKEKKDKKAK) are compositionally biased toward basic residues. Basic and acidic residues predominate over residues 532–551 (IKEDGTLEILSKKDFKGKDA). The span at 552-561 (EAEEEAEEEE) shows a compositional bias: acidic residues. A compositionally biased stretch (basic residues) spans 588-597 (KKKKKKSSKE).

It belongs to the NOP5/NOP56 family.

The protein localises to the nucleus. Its subcellular location is the nucleolus. In terms of biological role, required for pre-18S rRNA processing. May bind microtubules. This is Nucleolar protein 58 (nop-58) from Neurospora crassa (strain ATCC 24698 / 74-OR23-1A / CBS 708.71 / DSM 1257 / FGSC 987).